Reading from the N-terminus, the 733-residue chain is Phosphoribosylformylglycinamidine synthase subunit PurL (733 aa).

His-41 is a catalytic residue. Positions 44 and 83 each coordinate ATP. Glu-85 serves as a coordination point for Mg(2+). Substrate-binding positions include 86 to 89 (SHNH) and Arg-108. His-87 acts as the Proton acceptor in catalysis. Mg(2+) is bound at residue Asp-109. The segment at 212 to 232 (GASFASQELSEESEEKRPSVQ) is disordered. Gln-232 is a binding site for substrate. Asp-260 contacts Mg(2+). 304-306 (ESQ) is a binding site for substrate. 2 residues coordinate ATP: Asp-488 and Gly-525. Position 526 (Asn-526) interacts with Mg(2+). Ser-528 is a substrate binding site.

The protein belongs to the FGAMS family. As to quaternary structure, monomer. Part of the FGAM synthase complex composed of 1 PurL, 1 PurQ and 2 PurS subunits.

It localises to the cytoplasm. It catalyses the reaction N(2)-formyl-N(1)-(5-phospho-beta-D-ribosyl)glycinamide + L-glutamine + ATP + H2O = 2-formamido-N(1)-(5-O-phospho-beta-D-ribosyl)acetamidine + L-glutamate + ADP + phosphate + H(+). The protein operates within purine metabolism; IMP biosynthesis via de novo pathway; 5-amino-1-(5-phospho-D-ribosyl)imidazole from N(2)-formyl-N(1)-(5-phospho-D-ribosyl)glycinamide: step 1/2. Part of the phosphoribosylformylglycinamidine synthase complex involved in the purines biosynthetic pathway. Catalyzes the ATP-dependent conversion of formylglycinamide ribonucleotide (FGAR) and glutamine to yield formylglycinamidine ribonucleotide (FGAM) and glutamate. The FGAM synthase complex is composed of three subunits. PurQ produces an ammonia molecule by converting glutamine to glutamate. PurL transfers the ammonia molecule to FGAR to form FGAM in an ATP-dependent manner. PurS interacts with PurQ and PurL and is thought to assist in the transfer of the ammonia molecule from PurQ to PurL. This Thermoanaerobacter pseudethanolicus (strain ATCC 33223 / 39E) (Clostridium thermohydrosulfuricum) protein is Phosphoribosylformylglycinamidine synthase subunit PurL.